A 355-amino-acid polypeptide reads, in one-letter code: Uroporphyrinogen decarboxylase (355 aa).

Residues 27–31, Asp77, Tyr154, Thr209, and His327 each bind substrate; that span reads RQAGR.

It belongs to the uroporphyrinogen decarboxylase family. As to quaternary structure, homodimer.

Its subcellular location is the cytoplasm. The catalysed reaction is uroporphyrinogen III + 4 H(+) = coproporphyrinogen III + 4 CO2. The protein operates within porphyrin-containing compound metabolism; protoporphyrin-IX biosynthesis; coproporphyrinogen-III from 5-aminolevulinate: step 4/4. Catalyzes the decarboxylation of four acetate groups of uroporphyrinogen-III to yield coproporphyrinogen-III. The sequence is that of Uroporphyrinogen decarboxylase from Erwinia tasmaniensis (strain DSM 17950 / CFBP 7177 / CIP 109463 / NCPPB 4357 / Et1/99).